A 1820-amino-acid chain; its full sequence is Kinesin-like protein KIF20B (1820 aa).

The 422-residue stretch at 58-479 (YLQVCLRIRP…LKFSAIAQKV (422 aa)) folds into the Kinesin motor domain. Residue 152–159 (GLTNSGKT) coordinates ATP. Serine 488 carries the phosphoserine modification. 2 coiled-coil regions span residues 523 to 603 (ENSL…KIRE) and 674 to 793 (GFED…MENT). Threonine 560 is subject to Phosphothreonine. Positions 829–866 (SERKRVNENELQQDEPPAKKGSIHVSSAITEDQKKSEE) are disordered. Serine 997 is subject to Phosphoserine. A necessary and sufficient for interaction with SHTN1 region spans residues 1050–1107 (ENSFHSSIEAIWEECKEIVKASSKKSHQIEELEQQIEKLQAEVKGYKDENNRLKEKEH). Positions 1247-1264 (EEEEETNRQETEKLKEEL) are enriched in basic and acidic residues. The disordered stretch occupies residues 1247–1275 (EEEEETNRQETEKLKEELSASSARTQNLK). Positions 1265–1274 (SASSARTQNL) are enriched in polar residues. The segment at 1560–1820 (IETQIMDIKP…KRRLRTKTAK (261 aa)) is interaction with PIN1. At serine 1588 the chain carries Phosphoserine. A Phosphothreonine; by CDK1 modification is found at threonine 1644. A phosphoserine mark is found at serine 1658, serine 1715, and serine 1740. Polar residues predominate over residues 1760-1772 (LSNVEASKENVSQ). Positions 1760–1781 (LSNVEASKENVSQPKRAKRKLY) are disordered.

This sequence belongs to the TRAFAC class myosin-kinesin ATPase superfamily. Kinesin family. As to quaternary structure, oligomerizes (via kinesin motor domain). Associates with microtubules. Interacts (via C-terminal globular tail region) with PIN1 (via WW domain). Interacts with PRC1. Interacts with SHTN1 (via N-terminus); the interaction is direct and promotes the association of SHTN1 to microtubules in primary neurons. Post-translationally, phosphorylated during mitosis by CDK1. Brain, ovary, kidney and testis (at protein level). Overexpressed in bladder cancer cells (at protein level). Expressed in testis. Overexpressed in bladder cancer cells.

The protein resides in the nucleus. It localises to the cytoplasm. It is found in the cytoskeleton. Its subcellular location is the microtubule organizing center. The protein localises to the centrosome. The protein resides in the nucleolus. It localises to the nucleoplasm. It is found in the spindle. Its subcellular location is the spindle pole. The protein localises to the midbody. The protein resides in the cell projection. It localises to the axon. It is found in the growth cone. In terms of biological role, plus-end-directed motor enzyme that is required for completion of cytokinesis. Required for proper midbody organization and abscission in polarized cortical stem cells. Plays a role in the regulation of neuronal polarization by mediating the transport of specific cargos. Participates in the mobilization of SHTN1 and in the accumulation of PIP3 in the growth cone of primary hippocampal neurons in a tubulin and actin-dependent manner. In the developing telencephalon, cooperates with SHTN1 to promote both the transition from the multipolar to the bipolar stage and the radial migration of cortical neurons from the ventricular zone toward the superficial layer of the neocortex. Involved in cerebral cortex growth. Acts as an oncogene for promoting bladder cancer cells proliferation, apoptosis inhibition and carcinogenic progression. In Homo sapiens (Human), this protein is Kinesin-like protein KIF20B.